The sequence spans 332 residues: DNA repair and recombination protein RadA (332 aa).

Residue 126–133 coordinates ATP; that stretch reads GEFGSGKT.

The protein belongs to the eukaryotic RecA-like protein family.

In terms of biological role, involved in DNA repair and in homologous recombination. Binds and assemble on single-stranded DNA to form a nucleoprotein filament. Hydrolyzes ATP in a ssDNA-dependent manner and promotes DNA strand exchange between homologous DNA molecules. This is DNA repair and recombination protein RadA from Pyrobaculum calidifontis (strain DSM 21063 / JCM 11548 / VA1).